The following is a 514-amino-acid chain: Membrane-bound lytic murein transglycosylase F (514 aa).

The N-terminal stretch at 1–30 (MKKLKINYLFIGILTLLLAAALWPSIPWFG) is a signal peptide. Residues 31-269 (KTENHVAAIQ…RIEEKYLGHG (239 aa)) form a non-LT domain region. Residues 270 to 514 (DDFDYVDTRS…LFTPQKKEEK (245 aa)) form an LT domain region. The active site involves Glu314.

The protein in the N-terminal section; belongs to the bacterial solute-binding protein 3 family. It in the C-terminal section; belongs to the transglycosylase Slt family.

The protein resides in the cell outer membrane. It catalyses the reaction Exolytic cleavage of the (1-&gt;4)-beta-glycosidic linkage between N-acetylmuramic acid (MurNAc) and N-acetylglucosamine (GlcNAc) residues in peptidoglycan, from either the reducing or the non-reducing ends of the peptidoglycan chains, with concomitant formation of a 1,6-anhydrobond in the MurNAc residue.. Murein-degrading enzyme that degrades murein glycan strands and insoluble, high-molecular weight murein sacculi, with the concomitant formation of a 1,6-anhydromuramoyl product. Lytic transglycosylases (LTs) play an integral role in the metabolism of the peptidoglycan (PG) sacculus. Their lytic action creates space within the PG sacculus to allow for its expansion as well as for the insertion of various structures such as secretion systems and flagella. This chain is Membrane-bound lytic murein transglycosylase F, found in Salmonella arizonae (strain ATCC BAA-731 / CDC346-86 / RSK2980).